The sequence spans 162 residues: Xanthine-guanine phosphoribosyltransferase (162 aa).

5-phospho-alpha-D-ribose 1-diphosphate-binding positions include 43–44 (RG) and 94–102 (DDLVDTGTT). Asp-95 is a Mg(2+) binding site. Guanine is bound by residues Asp-98 and Ile-141. Xanthine is bound by residues Asp-98 and Ile-141. Residues 98-102 (DTGTT) and 140-141 (WI) contribute to the GMP site.

It belongs to the purine/pyrimidine phosphoribosyltransferase family. XGPT subfamily. As to quaternary structure, homotetramer. It depends on Mg(2+) as a cofactor.

Its subcellular location is the cell inner membrane. The enzyme catalyses GMP + diphosphate = guanine + 5-phospho-alpha-D-ribose 1-diphosphate. It carries out the reaction XMP + diphosphate = xanthine + 5-phospho-alpha-D-ribose 1-diphosphate. It catalyses the reaction IMP + diphosphate = hypoxanthine + 5-phospho-alpha-D-ribose 1-diphosphate. The protein operates within purine metabolism; GMP biosynthesis via salvage pathway; GMP from guanine: step 1/1. It functions in the pathway purine metabolism; XMP biosynthesis via salvage pathway; XMP from xanthine: step 1/1. In terms of biological role, purine salvage pathway enzyme that catalyzes the transfer of the ribosyl-5-phosphate group from 5-phospho-alpha-D-ribose 1-diphosphate (PRPP) to the N9 position of the 6-oxopurines guanine and xanthine to form the corresponding ribonucleotides GMP (guanosine 5'-monophosphate) and XMP (xanthosine 5'-monophosphate), with the release of PPi. To a lesser extent, also acts on hypoxanthine. This is Xanthine-guanine phosphoribosyltransferase from Oleidesulfovibrio alaskensis (strain ATCC BAA-1058 / DSM 17464 / G20) (Desulfovibrio alaskensis).